The primary structure comprises 265 residues: Anamorsin homolog 1 (265 aa).

Residues 1–143 form an N-terminal SAM-like domain region; that stretch reads MAATVAEALA…KVSWSLGSSF (143 aa). The interval 144–175 is linker; sequence PLKKATKGLPKIQIDDDSELIDEDSLLTEDDL. Positions 186, 195, 198, and 200 each coordinate [2Fe-2S] cluster. The fe-S binding site A stretch occupies residues 186–200; it reads CEVGATRKACKNCTC. [4Fe-4S] cluster contacts are provided by Cys-226, Cys-229, Cys-237, and Cys-240. 2 short sequence motifs (cx2C motif) span residues 226 to 229 and 237 to 240; these read CGNC and CGTC. A fe-S binding site B region spans residues 226-240; the sequence is CGNCGLGDAFRCGTC.

This sequence belongs to the anamorsin family. As to quaternary structure, monomer. It depends on [2Fe-2S] cluster as a cofactor. Requires [4Fe-4S] cluster as cofactor.

Its subcellular location is the cytoplasm. It localises to the mitochondrion intermembrane space. Functionally, component of the cytosolic iron-sulfur (Fe-S) protein assembly (CIA) machinery. Required for the maturation of extramitochondrial Fe-S proteins. Part of an electron transfer chain functioning in an early step of cytosolic Fe-S biogenesis, facilitating the de novo assembly of a [4Fe-4S] cluster on the cytosolic Fe-S scaffold complex. Electrons are transferred from NADPH via a FAD- and FMN-containing diflavin oxidoreductase. Together with the diflavin oxidoreductase, also required for the assembly of the diferric tyrosyl radical cofactor of ribonucleotide reductase (RNR), probably by providing electrons for reduction during radical cofactor maturation in the catalytic small subunit. In Oryza sativa subsp. japonica (Rice), this protein is Anamorsin homolog 1.